A 340-amino-acid chain; its full sequence is Probable glucan endo-1,3-beta-glucosidase BG1 (340 aa).

The signal sequence occupies residues 1–25; that stretch reads MDLRFLASLTLLLGLFFVNTNPTGG. Glu-120 serves as the catalytic Proton donor. The active-site Nucleophile is the Glu-262.

Belongs to the glycosyl hydrolase 17 family.

It is found in the secreted. It carries out the reaction Hydrolysis of (1-&gt;3)-beta-D-glucosidic linkages in (1-&gt;3)-beta-D-glucans.. Functionally, may play a role in plant defense against pathogens. This is Probable glucan endo-1,3-beta-glucosidase BG1 from Arabidopsis thaliana (Mouse-ear cress).